Here is a 249-residue protein sequence, read N- to C-terminus: Short-chain dehydrogenase virB (249 aa).

Residues I16, R104, Y150, K154, V183, and T185 each coordinate NADP(+). The active-site Proton donor is Y150. K154 (lowers pKa of active site Tyr) is an active-site residue.

Belongs to the short-chain dehydrogenases/reductases (SDR) family.

It participates in secondary metabolite biosynthesis. Short-chain dehydrogenase; part of the gene cluster that mediates the biosynthesis of virensols and trichoxide, fungal natural products that contain or are derived from a salicylaldehyde core. The pathway begins with the synthesis of the reduced chain in virensol C by the highly reducing polyketide synthase virA via condensation of one acetate and 8 malonate units. VirA has interesting programming rules since the first 2 ketides are fully reduced, the 3 following ketides undergo beta-dehydration, and the last 3 ketides are only reduced to beta-hydroxys to yield the trihydroxy portion. The production of aldehyde virensol C by virA alone is surprising, since virA does not contain a reductase (R) domain that is typically associated with reductive product release in HRPKS. The cupin-domain enzyme virC is involved in enhancing virA product turnover. The short-chain dehydrogenase virB then oxidizes the C-7 alcohol of virensol C to a ketone, yielding virensol D. Virensol D is further transformed to salicylaldehyde 5-deoxyaurocitrin by the short-chain dehydrogenase virD. VirD catalyzes the dehydrogenation of C-3 to form the beta-ketone aldehyde, which is followed by the generation of the nucleophilic C-2 that is required for the intramolecular aldol condensation between C-2 and C-7, itself followed by dehydration and aromatization which leads to salicylaldehyde 5-deoxyaurocitrin. While the dehydrogenation of virensol D is definitely catalyzed by virD, the aldol condensation and dehydration may be uncatalyzed or assisted by virD. The short chain dehydrogenase virG then converts salicylaldehyde 5-deoxyaurocitrin into virensol B which is further hydroxylated by the cytochrome P450 monooxygenase virE to yield the hydroquinone virensol A. VirI then may oxidize virensol A to form the quinone, while virH performs the epoxidation. Finally, the two remaining short-chain dehydrogenases, virK and virL, are probably responsible for reducing the ketones to the corresponding alcohols to furnish the epoxycyclohexanol structure in trichoxide. The polypeptide is Short-chain dehydrogenase virB (Hypocrea virens (strain Gv29-8 / FGSC 10586) (Gliocladium virens)).